Reading from the N-terminus, the 123-residue chain is UPF0102 protein Dole_2298 (123 aa).

This sequence belongs to the UPF0102 family.

In Desulfosudis oleivorans (strain DSM 6200 / JCM 39069 / Hxd3) (Desulfococcus oleovorans), this protein is UPF0102 protein Dole_2298.